The chain runs to 219 residues: Protein GrpE (219 aa).

Disordered stretches follow at residues 1–32 (MSTT…LDAT) and 59–87 (FDGV…AERT).

This sequence belongs to the GrpE family. As to quaternary structure, homodimer.

Its subcellular location is the cytoplasm. In terms of biological role, participates actively in the response to hyperosmotic and heat shock by preventing the aggregation of stress-denatured proteins, in association with DnaK and GrpE. It is the nucleotide exchange factor for DnaK and may function as a thermosensor. Unfolded proteins bind initially to DnaJ; upon interaction with the DnaJ-bound protein, DnaK hydrolyzes its bound ATP, resulting in the formation of a stable complex. GrpE releases ADP from DnaK; ATP binding to DnaK triggers the release of the substrate protein, thus completing the reaction cycle. Several rounds of ATP-dependent interactions between DnaJ, DnaK and GrpE are required for fully efficient folding. In Corynebacterium diphtheriae (strain ATCC 700971 / NCTC 13129 / Biotype gravis), this protein is Protein GrpE.